We begin with the raw amino-acid sequence, 254 residues long: 3-deoxy-manno-octulosonate cytidylyltransferase (254 aa).

Belongs to the KdsB family.

The protein resides in the cytoplasm. It catalyses the reaction 3-deoxy-alpha-D-manno-oct-2-ulosonate + CTP = CMP-3-deoxy-beta-D-manno-octulosonate + diphosphate. Its pathway is nucleotide-sugar biosynthesis; CMP-3-deoxy-D-manno-octulosonate biosynthesis; CMP-3-deoxy-D-manno-octulosonate from 3-deoxy-D-manno-octulosonate and CTP: step 1/1. It participates in bacterial outer membrane biogenesis; lipopolysaccharide biosynthesis. In terms of biological role, activates KDO (a required 8-carbon sugar) for incorporation into bacterial lipopolysaccharide in Gram-negative bacteria. This is 3-deoxy-manno-octulosonate cytidylyltransferase from Pseudoalteromonas atlantica (strain T6c / ATCC BAA-1087).